Consider the following 852-residue polypeptide: Gamma-tubulin complex component 2 homolog (852 aa).

Ser73 is modified (phosphoserine).

It belongs to the TUBGCP family. As to quaternary structure, gamma-tubulin small complex (Gamma TuSC) is a heterotetrameric complex which contains two molecules of gamma-tubulin, and one molecule each of Dgrip84 and Dgrip91. The gamma-tubulin in this complex binds preferentially to GDP over GTP.

It localises to the cytoplasm. The protein resides in the cytoskeleton. Its subcellular location is the microtubule organizing center. It is found in the centrosome. The protein localises to the perinuclear region. In Drosophila melanogaster (Fruit fly), this protein is Gamma-tubulin complex component 2 homolog (Grip84).